The following is a 783-amino-acid chain: E3 UFM1-protein ligase 1 homolog (783 aa).

A disordered region spans residues 404–482; the sequence is SNSSANFDAD…AGSSRKSVKP (79 aa). Positions 445–457 are enriched in basic residues; it reads KSTKKHQRGRAAA.

It belongs to the UFL1 family.

In terms of biological role, E3 UFM1-protein ligase that mediates ufmylation of target proteins. This Drosophila mojavensis (Fruit fly) protein is E3 UFM1-protein ligase 1 homolog.